The chain runs to 330 residues: Embigin (330 aa).

Positions 1 to 33 (MRSHTGLRALVAPGYPLLLLCLLAATRPDPAEG) are cleaved as a signal peptide. Residues 34-254 (DPTDPTFTSL…QLGESEEQNE (221 aa)) lie on the Extracellular side of the membrane. Ig-like V-type domains follow at residues 38–161 (PTFT…IHVP) and 162–256 (KAHG…NELV). Asparagine 55, asparagine 62, asparagine 70, asparagine 101, asparagine 118, asparagine 191, asparagine 198, asparagine 216, and asparagine 221 each carry an N-linked (GlcNAc...) asparagine glycan. 2 disulfide bridges follow: cysteine 89/cysteine 145 and cysteine 182/cysteine 240. Residues 255–283 (LVVLSFLVPLKPFLAILAEVILLVAIILL) form a helical membrane-spanning segment. The Cytoplasmic portion of the chain corresponds to 284–330 (CEVYTHKKKNDPDAGKEFEQIEQLKSDDSNGIENNVPRYRKTDSADQ). A compositionally biased stretch (basic and acidic residues) spans 293–311 (NDPDAGKEFEQIEQLKSDD). A disordered region spans residues 293–330 (NDPDAGKEFEQIEQLKSDDSNGIENNVPRYRKTDSADQ). Position 312 is a phosphoserine (serine 312).

In terms of assembly, interacts with SLC16A1, SLC16A6 and SLC16A7. In terms of tissue distribution, only member of the immunoglobulin superfamily to be expressed in embryonal carcinoma cells, which resemble multipotential cells of early embryos.

Its subcellular location is the cell membrane. It is found in the synapse. In terms of biological role, plays a role in targeting the monocarboxylate transporters SLC16A1, SLC16A6 and SLC16A7 to the cell membrane. Plays a role in the outgrowth of motoneurons and in the formation of neuromuscular junctions. Following muscle denervation, promotes nerve terminal sprouting and the formation of additional acetylcholine receptor clusters at synaptic sites without affecting terminal Schwann cell number or morphology. Delays the retraction of terminal sprouts following re-innervation of denervated endplates. This Mus musculus (Mouse) protein is Embigin (Emb).